The primary structure comprises 215 residues: Chaperone protein TorD (215 aa).

Belongs to the TorD/DmsD family. TorD subfamily.

The protein resides in the cytoplasm. Its function is as follows. Involved in the biogenesis of TorA. Acts on TorA before the insertion of the molybdenum cofactor and, as a result, probably favors a conformation of the apoenzyme that is competent for acquiring the cofactor. The chain is Chaperone protein TorD from Aliivibrio salmonicida (strain LFI1238) (Vibrio salmonicida (strain LFI1238)).